The primary structure comprises 355 residues: Magnesium-chelatase subunit ChlI (355 aa).

46–53 (GDRGTGKS) is a binding site for ATP. Cysteine 281 and cysteine 323 are oxidised to a cystine.

Belongs to the Mg-chelatase subunits D/I family. The magnesium chelatase complex is a heterotrimer consisting of subunits CHLI, CHLD and CHLH.

It localises to the plastid. It is found in the chloroplast. It carries out the reaction protoporphyrin IX + Mg(2+) + ATP + H2O = Mg-protoporphyrin IX + ADP + phosphate + 3 H(+). Its pathway is porphyrin-containing compound metabolism; chlorophyll biosynthesis. Its activity is regulated as follows. Redox regulation; active in reducing conditions, inactive in oxidizing conditions. Thioredoxins f and m mediate the reversible reductive activation of oxidized CHLI. In terms of biological role, involved in chlorophyll biosynthesis. Catalyzes the insertion of magnesium ion into protoporphyrin IX to yield Mg-protoporphyrin IX. The magnesium-chelatase is a complex of three subunits, CHLI, CHLD and CHLH. The reaction takes place in two steps, with an ATP-dependent activation followed by an ATP-dependent chelation step. The polypeptide is Magnesium-chelatase subunit ChlI (chlI) (Nephroselmis olivacea (Green alga)).